We begin with the raw amino-acid sequence, 577 residues long: Hemagglutinin-neuraminidase (577 aa).

At 1–26 the chain is on the intravirion side; the sequence is MDRAVSQVALENDEREAKNTWRLIFR. The chain crosses the membrane as a helical span at residues 27–47; that stretch reads IAILFLTVVTLAISVASLLYS. The Virion surface segment spans residues 48–577; that stretch reads MGASTPSDLV…DDGVREARSG (530 aa). N119 carries an N-linked (GlcNAc...) asparagine; by host glycan. Residues 124-152 form an important for interaction with fusion/F protein region; it reads GAPIHDPDYIGGIGKELIVDDASDVTSFY. Disulfide bonds link C172-C196, C186-C247, and C238-C251. Residues 234–239 form an involved in neuraminidase activity region; the sequence is NRKSCS. Residues N341 and N433 are each glycosylated (N-linked (GlcNAc...) asparagine; by host). 2 disulfides stabilise this stretch: C344–C461 and C455–C465. N-linked (GlcNAc...) asparagine; by host glycans are attached at residues N481 and N538. A disulfide bridge links C531 with C542.

This sequence belongs to the paramyxoviruses hemagglutinin-neuraminidase family. As to quaternary structure, homotetramer; composed of disulfide-linked homodimers. Interacts with F protein trimer. Interacts with host CG-1B; this interaction inhibits viral adsorption and replication rather than internalization.

It localises to the virion membrane. The protein resides in the host cell membrane. The catalysed reaction is Hydrolysis of alpha-(2-&gt;3)-, alpha-(2-&gt;6)-, alpha-(2-&gt;8)- glycosidic linkages of terminal sialic acid residues in oligosaccharides, glycoproteins, glycolipids, colominic acid and synthetic substrates.. Its function is as follows. Mediates the viral entry into the host cell together with fusion/F protein. Attaches the virus to sialic acid-containing cell receptors and thereby initiates infection. Binding of HN protein to the receptor induces a conformational change that allows the F protein to trigger virion/cell membranes fusion. In terms of biological role, neuraminidase activity ensures the efficient spread of the virus by dissociating the mature virions from the neuraminic acid containing glycoproteins. The protein is Hemagglutinin-neuraminidase (HN) of Newcastle disease virus (strain Chicken/United States/LaSota/46) (NDV).